Here is a 302-residue protein sequence, read N- to C-terminus: Pathogenicity locus probable regulatory protein HrpS (302 aa).

Residues 9–237 (DDLDEERVPN…LKAAAKRHVL (229 aa)) enclose the Sigma-54 factor interaction domain. Residues 37–44 (GETGTGKD) and 99–108 (AQGGTLYLDE) each bind ATP. The segment at residues 279 to 298 (IDAASLELDMPRRTLYRRIK) is a DNA-binding region (H-T-H motif).

Member of the two-component regulatory system HrpR/HrpS that regulates the activation of the sigma factor hrpL which itself induces the expression of hprD as well as other hrp loci which are involved in plant pathogenicity, hrmA and avr genes. Probably interacts with sigma-54. This chain is Pathogenicity locus probable regulatory protein HrpS (hrpS), found in Pseudomonas savastanoi pv. phaseolicola (Pseudomonas syringae pv. phaseolicola).